Reading from the N-terminus, the 396-residue chain is Potassium channel subfamily K member 9 (396 aa).

Over 1–8 (MKRQNVRT) the chain is Cytoplasmic. The chain crosses the membrane as a helical span at residues 9 to 29 (LSLIACTFTYLLVGAAVFDAL). Residues 30–88 (ESDHEMREEEKLKAEEVRLRGKYNISSDDYQQLELVILQSEPHRAGVQWKFAGSFYFAI) are Extracellular-facing. Asn53 is a glycosylation site (N-linked (GlcNAc...) asparagine). Residues 89–101 (TVITTIGYGHAAP) constitute an intramembrane region (pore-forming). Thr93, Ile94, Gly95, and Tyr96 together coordinate K(+). Residues 93-98 (TIGYGH) are selectivity filter 1. Residues 102–107 (GTDAGK) are Extracellular-facing. A helical membrane pass occupies residues 108–128 (AFCMFYAVLGIPLTLVMFQSL). Topologically, residues 129–158 (GERMNTFVRYLLKRIKKCCGMRNTEVSMEN) are cytoplasmic. Residues 159–179 (MVTVGFFSCMGTLCLGAAAFS) traverse the membrane as a helical segment. Residues 180–194 (QCEDWSFFHAYYYCF) lie on the Extracellular side of the membrane. The segment at residues 195 to 207 (ITLTTIGFGDFVA) is an intramembrane region (pore-forming). Residues Thr199, Ile200, Gly201, and Phe202 each coordinate K(+). Residues 199-204 (TIGFGD) are selectivity filter 2. The Extracellular portion of the chain corresponds to 208–218 (LQSKGALQRKP). The helical transmembrane segment at 219-239 (FYVAFSFMYILVGLTVIGAFL) threads the bilayer. The Cytoplasmic portion of the chain corresponds to 240 to 396 (NLVVLRFLTM…HRLHIRRKSI (157 aa)). The X-gate stretch occupies residues 243-248 (VLRFLT).

This sequence belongs to the two pore domain potassium channel (TC 1.A.1.8) family. As to quaternary structure, homodimer. Heterodimer with KCNK1. Heterodimer with KCNK3. Highly expressed in the CNS and at lower levels in the colon, kidney, liver, lung, spleen, stomach and skeletal muscle. The highest expression was found in the olfactory nuclei, piriform cortex, cerebellum, antedorsal thalmic nucleus, pontine nucleus, dorsal raphe and several nuclei in the medulla. Shows a non-homogeneous distribution in the hippocampus. Expressed at highest levels in the lateral posterior and inferior portions and at medium levels in neocortex. Expressed in motoneurons, including hypoglossal motoneurons (at protein level).

Its subcellular location is the cell membrane. It localises to the mitochondrion inner membrane. The protein localises to the cell projection. The protein resides in the dendrite. The catalysed reaction is K(+)(in) = K(+)(out). It carries out the reaction Na(+)(in) = Na(+)(out). Activated by halothane and isoflurane. Inhibited by external acidification, diacylglycerol, anandamide and AGT/angiotensin II. Ruthenium red inhibits homomeric but not KCNK3:KCNK9 heteromeric channels. Functionally, k(+) channel that conducts voltage-dependent outward rectifying currents upon membrane depolarization. Voltage sensing is coupled to K(+) electrochemical gradient in an 'ion flux gating' mode where outward but not inward ion flow opens the gate. Changes ion selectivity and becomes permeable to Na(+) ions in response to extracellular acidification. Protonation of the pH sensor His-98 stabilizes C-type inactivation conformation likely converting the channel from outward K(+)-conducting, to inward Na(+)-conducting to nonconductive state. Homo- and heterodimerizes to form functional channels with distinct regulatory and gating properties. Allows K(+) currents with fast-gating kinetics important for the repolarization and hyperpolarization phases of action potentials. In granule neurons, hyperpolarizes the resting membrane potential to limit intrinsic neuronal excitability, but once the action potential threshold is reached, supports high-frequency action potential firing and increased neuronal excitability. Homomeric and/or heteromeric KCNK3:KCNK9 channels operate in cerebellar granule cells, whereas heteromeric KCNK1:KCNK9 enables currents in hippocampal dentate gyrus granule neurons. Dispensable for central chemosensory respiration i.e. breathing controlled by brainstem CO2/pH, it rather conducts pH-sensitive currents and controls the firing rate of serotonergic raphe neurons involved in potentiation of the respiratory chemoreflex. In retinal ganglion cells, mediates outward rectifying currents that regulate action potentials in response to acidification of the synaptic cleft. Involved in transmission of image-forming and nonimage-forming visual information in the retina. In adrenal gland, contributes to the maintenance of a hyperpolarized resting membrane potential of aldosterone-producing cells at zona glomerulosa and limits aldosterone release as part of a regulatory mechanism that controls arterial blood pressure and electrolyte homeostasis. This Rattus norvegicus (Rat) protein is Potassium channel subfamily K member 9.